A 485-amino-acid chain; its full sequence is Glutamyl-tRNA(Gln) amidotransferase subunit A (485 aa).

Active-site charge relay system residues include Lys76 and Ser152. The active-site Acyl-ester intermediate is Ser176.

This sequence belongs to the amidase family. GatA subfamily. Heterotrimer of A, B and C subunits.

The catalysed reaction is L-glutamyl-tRNA(Gln) + L-glutamine + ATP + H2O = L-glutaminyl-tRNA(Gln) + L-glutamate + ADP + phosphate + H(+). Allows the formation of correctly charged Gln-tRNA(Gln) through the transamidation of misacylated Glu-tRNA(Gln) in organisms which lack glutaminyl-tRNA synthetase. The reaction takes place in the presence of glutamine and ATP through an activated gamma-phospho-Glu-tRNA(Gln). The chain is Glutamyl-tRNA(Gln) amidotransferase subunit A from Dechloromonas aromatica (strain RCB).